Here is a 186-residue protein sequence, read N- to C-terminus: Crossover junction endodeoxyribonuclease RuvC (186 aa).

Catalysis depends on residues Asp-14, Glu-73, and Asp-145. 3 residues coordinate Mg(2+): Asp-14, Glu-73, and Asp-145. Residues 162 to 186 are disordered; it reads GRSLPPSRGRRRSGSRQRWRDYRPS. Residues 169–178 show a composition bias toward basic residues; sequence RGRRRSGSRQ.

The protein belongs to the RuvC family. In terms of assembly, homodimer which binds Holliday junction (HJ) DNA. The HJ becomes 2-fold symmetrical on binding to RuvC with unstacked arms; it has a different conformation from HJ DNA in complex with RuvA. In the full resolvosome a probable DNA-RuvA(4)-RuvB(12)-RuvC(2) complex forms which resolves the HJ. Requires Mg(2+) as cofactor.

It is found in the cytoplasm. The catalysed reaction is Endonucleolytic cleavage at a junction such as a reciprocal single-stranded crossover between two homologous DNA duplexes (Holliday junction).. The RuvA-RuvB-RuvC complex processes Holliday junction (HJ) DNA during genetic recombination and DNA repair. Endonuclease that resolves HJ intermediates. Cleaves cruciform DNA by making single-stranded nicks across the HJ at symmetrical positions within the homologous arms, yielding a 5'-phosphate and a 3'-hydroxyl group; requires a central core of homology in the junction. The consensus cleavage sequence is 5'-(A/T)TT(C/G)-3'. Cleavage occurs on the 3'-side of the TT dinucleotide at the point of strand exchange. HJ branch migration catalyzed by RuvA-RuvB allows RuvC to scan DNA until it finds its consensus sequence, where it cleaves and resolves the cruciform DNA. The sequence is that of Crossover junction endodeoxyribonuclease RuvC from Chromohalobacter salexigens (strain ATCC BAA-138 / DSM 3043 / CIP 106854 / NCIMB 13768 / 1H11).